A 955-amino-acid polypeptide reads, in one-letter code: Glutamyl aminopeptidase (955 aa).

Residues 1–17 are Cytoplasmic-facing; sequence MDIEDKTSKMHCMKGKH. The helical; Signal-anchor for type II membrane protein transmembrane segment at 18 to 38 threads the bilayer; the sequence is VVIICGVVIAVGLILGLGLGL. The Extracellular portion of the chain corresponds to 39-955; the sequence is GLDTKACNPP…LENSEHSNFA (917 aa). N-linked (GlcNAc...) asparagine glycans are attached at residues asparagine 118 and asparagine 192. Glutamate 218 provides a ligand contact to substrate. Asparagine 319 and asparagine 335 each carry an N-linked (GlcNAc...) asparagine glycan. 352–356 is a binding site for substrate; that stretch reads GAMEN. Histidine 388 is a binding site for Zn(2+). Glutamate 389 serves as the catalytic Proton acceptor. Zn(2+) is bound by residues histidine 392 and glutamate 411. N-linked (GlcNAc...) asparagine glycans are attached at residues asparagine 458, asparagine 547, asparagine 584, asparagine 592, asparagine 674, asparagine 759, asparagine 823, and asparagine 836. Arginine 882 is a binding site for substrate.

This sequence belongs to the peptidase M1 family. Homodimer; disulfide-linked. Requires Zn(2+) as cofactor. N-glycosylated. Glycosylation counts for an increased mass of about 32% of the protein mass (about 48 kDa).

The protein resides in the cell membrane. The enzyme catalyses Release of N-terminal glutamate (and to a lesser extent aspartate) from a peptide.. With respect to regulation, substrate specificity is modulated by calcium which enhances the enzymatic activity for cleavage of acidic residues while reducing its activity with neutral and basic residues. Hydrolytic activity is inhibited by the aminopeptidase inhibitor (Leu and acidic inhibitor) amastatin, but not by bestatin (aminopeptidase inhibitor Leu inhibitor), leupeptin, pepstatin A and PMSF. Its hydrolytic activity is also strongly reduced by zinc ions, with a complete inhibition at 0.5 mM, and moderately inhibited by cobalt and copper ions. Its function is as follows. Venom protein that cleaves N-terminal acidic residues from peptides with high potency in presence of calcium. It may have several roles in venom including alteration of blood pressure by cleaving circulating angiotensin-2, general degradation of host tissue, increase of permeability to other venom components, and/or processing of other toxins in the venom. The polypeptide is Glutamyl aminopeptidase (Bitis rhinoceros (West African gaboon viper)).